The primary structure comprises 1301 residues: Tyrosine-protein phosphatase 99A (1301 aa).

The N-terminal stretch at 1-28 is a signal peptide; it reads MPRPQHHALLRAMLKLLLFASIAEHCAT. Over 29–394 the chain is Extracellular; that stretch reads ALPTNSSNSP…RQSHNDYNLA (366 aa). The tract at residues 31 to 63 is disordered; the sequence is PTNSSNSPSSPSPFTVASLPPTTASSSSSPAVI. An N-linked (GlcNAc...) asparagine glycan is attached at Asn33. Low complexity predominate over residues 33 to 63; it reads NSSNSPSSPSPFTVASLPPTTASSSSSPAVI. 3 Fibronectin type-III domains span residues 66 to 165, 173 to 269, and 270 to 376; these read SSFD…YAAV, KPQN…TDVG, and GPSA…LQPN. N-linked (GlcNAc...) asparagine glycosylation is found at Asn176, Asn212, Asn278, Asn322, and Asn336. The chain crosses the membrane as a helical span at residues 395-415; it reads VLVGIIFSCFGIILIIMAFFL. Topologically, residues 416-1301 are cytoplasmic; that stretch reads WSRKCFHAAY…TDAQNLDIVG (886 aa). Tyrosine-protein phosphatase domains follow at residues 476–741 and 764–1016; these read FSRE…LVEA and LEQQ…LSFL. Cys682 acts as the Phosphocysteine intermediate in catalysis. Polar residues predominate over residues 1092–1106; it reads TALNETVSTPSTDTN. 2 disordered regions span residues 1092 to 1199 and 1257 to 1281; these read TALN…PTIP and VGDL…NNHI. The span at 1107-1130 shows a compositional bias: low complexity; sequence PSLLPILSLLPPTVAPLSSSSSTT. Positions 1131 to 1142 are enriched in pro residues; that stretch reads PPTPSTPTPQPP. Positions 1150-1161 are enriched in polar residues; sequence HSPSDLSHQISS. Residues 1162–1188 are compositionally biased toward low complexity; sequence TVANAASPVTPATASASAGATPTTPMT. A compositionally biased stretch (polar residues) spans 1264 to 1273; the sequence is NADNSPTASP.

Belongs to the protein-tyrosine phosphatase family. Receptor class subfamily. Selectively expressed in a subset of axons and pioneer neurons (including aCC and RP2) in the embryo.

It localises to the membrane. It carries out the reaction O-phospho-L-tyrosyl-[protein] + H2O = L-tyrosyl-[protein] + phosphate. Functionally, may play a key role in signal transduction and growth control. May have a role in the establishment of the intersegmental and segmental nerves. This Drosophila melanogaster (Fruit fly) protein is Tyrosine-protein phosphatase 99A (Ptp99A).